The primary structure comprises 638 residues: Probable beta-glucosidase C (638 aa).

The first 18 residues, 1–18 (MKVLAPGYLAEASLTALA), serve as a signal peptide directing secretion. Residues asparagine 40, asparagine 94, asparagine 116, asparagine 223, and asparagine 274 are each glycosylated (N-linked (GlcNAc...) asparagine). Residue aspartate 341 is part of the active site. Residues asparagine 364, asparagine 480, asparagine 488, and asparagine 528 are each glycosylated (N-linked (GlcNAc...) asparagine).

The protein belongs to the glycosyl hydrolase 3 family.

It is found in the secreted. The catalysed reaction is Hydrolysis of terminal, non-reducing beta-D-glucosyl residues with release of beta-D-glucose.. Its pathway is glycan metabolism; cellulose degradation. Functionally, beta-glucosidases are one of a number of cellulolytic enzymes involved in the degradation of cellulosic biomass. Catalyzes the last step releasing glucose from the inhibitory cellobiose. The sequence is that of Probable beta-glucosidase C (bglC) from Aspergillus oryzae (strain ATCC 42149 / RIB 40) (Yellow koji mold).